We begin with the raw amino-acid sequence, 421 residues long: ATP-dependent RNA helicase RhlB (421 aa).

Residues 9–37 (QKFSDFALHPQVVEALEKKRFYNCTPIQA) carry the Q motif motif. The 180-residue stretch at 40–219 (LPLTLAGRDV…FEQMNNAEYV (180 aa)) folds into the Helicase ATP-binding domain. Residue 53–60 (AQTGTGKT) participates in ATP binding. A DEAD box motif is present at residues 165–168 (DEAD). A Helicase C-terminal domain is found at 245–390 (RLLQTLIEEE…VSKYNPEALM (146 aa)). A disordered region spans residues 396 to 421 (PLRLTRSRPGNGPRRAGAPRNRRRSG). Positions 402-414 (SRPGNGPRRAGAP) are enriched in low complexity.

The protein belongs to the DEAD box helicase family. RhlB subfamily. In terms of assembly, component of the RNA degradosome, which is a multiprotein complex involved in RNA processing and mRNA degradation.

The protein localises to the cytoplasm. The catalysed reaction is ATP + H2O = ADP + phosphate + H(+). Functionally, DEAD-box RNA helicase involved in RNA degradation. Has RNA-dependent ATPase activity and unwinds double-stranded RNA. The polypeptide is ATP-dependent RNA helicase RhlB (Salmonella dublin (strain CT_02021853)).